The following is a 248-amino-acid chain: Phycocyanobilin:ferredoxin oxidoreductase (248 aa).

Belongs to the HY2 family.

The catalysed reaction is (2R,3Z)-phycocyanobilin + 4 oxidized [2Fe-2S]-[ferredoxin] = biliverdin IXalpha + 4 reduced [2Fe-2S]-[ferredoxin] + 4 H(+). Functionally, catalyzes the four-electron reduction of biliverdin IX-alpha (2-electron reduction at both the A and D rings); the reaction proceeds via an isolatable 2-electron intermediate, 181,182-dihydrobiliverdin. This Synechococcus elongatus (strain ATCC 33912 / PCC 7942 / FACHB-805) (Anacystis nidulans R2) protein is Phycocyanobilin:ferredoxin oxidoreductase (pcyA).